A 764-amino-acid chain; its full sequence is 5-methyltetrahydropteroyltriglutamate--homocysteine methyltransferase (764 aa).

5-methyltetrahydropteroyltri-L-glutamate contacts are provided by residues R17–K20 and K117. L-homocysteine contacts are provided by residues I437 to S439 and E490. Residues I437–S439 and E490 contribute to the L-methionine site. Residues R521–C522 and W567 each bind 5-methyltetrahydropteroyltri-L-glutamate. D605 is an L-homocysteine binding site. Position 605 (D605) interacts with L-methionine. E611 contacts 5-methyltetrahydropteroyltri-L-glutamate. Residues H647, C649, and E671 each contribute to the Zn(2+) site. H701 (proton donor) is an active-site residue. C733 is a binding site for Zn(2+).

Belongs to the vitamin-B12 independent methionine synthase family. Zn(2+) is required as a cofactor.

The catalysed reaction is 5-methyltetrahydropteroyltri-L-glutamate + L-homocysteine = tetrahydropteroyltri-L-glutamate + L-methionine. It participates in amino-acid biosynthesis; L-methionine biosynthesis via de novo pathway; L-methionine from L-homocysteine (MetE route): step 1/1. Functionally, catalyzes the transfer of a methyl group from 5-methyltetrahydrofolate to homocysteine resulting in methionine formation. This chain is 5-methyltetrahydropteroyltriglutamate--homocysteine methyltransferase, found in Blochmanniella pennsylvanica (strain BPEN).